We begin with the raw amino-acid sequence, 132 residues long: Ragulator complex protein LAMTOR3 homolog (132 aa).

It belongs to the LAMTOR3 family. Part of the Ragulator complex.

In terms of biological role, regulator of the TOR pathway, a signaling cascade that promotes cell growth in response to growth factors, energy levels, and amino acids. May activate the TOR signaling cascade in response to amino acids. This Dictyostelium discoideum (Social amoeba) protein is Ragulator complex protein LAMTOR3 homolog.